Reading from the N-terminus, the 472-residue chain is Alkaline phosphatase (472 aa).

Residues 1–21 (MKQSAIALALLSCLITPVSQA) form the signal peptide. Asp-74 serves as a coordination point for Mg(2+). Asp-74 is a Zn(2+) binding site. Ser-125 functions as the Phosphoserine intermediate in the catalytic mechanism. Residues Asp-176 and Thr-178 each contribute to the Mg(2+) site. 2 disulfide bridges follow: Cys-191–Cys-201 and Cys-309–Cys-359. Glu-345 contributes to the Mg(2+) binding site. Positions 350, 354, 392, 393, and 435 each coordinate Zn(2+).

The protein belongs to the alkaline phosphatase family. Homodimer. It depends on Mg(2+) as a cofactor. Requires Zn(2+) as cofactor.

Its subcellular location is the periplasm. The catalysed reaction is a phosphate monoester + H2O = an alcohol + phosphate. The chain is Alkaline phosphatase (phoA) from Escherichia fergusonii (strain ATCC 35469 / DSM 13698 / CCUG 18766 / IAM 14443 / JCM 21226 / LMG 7866 / NBRC 102419 / NCTC 12128 / CDC 0568-73).